Reading from the N-terminus, the 285-residue chain is UDP-3-O-acyl-N-acetylglucosamine deacetylase (285 aa).

Zn(2+) contacts are provided by His-89, His-243, and Asp-247. The active-site Proton donor is His-270.

This sequence belongs to the LpxC family. The cofactor is Zn(2+).

The enzyme catalyses a UDP-3-O-[(3R)-3-hydroxyacyl]-N-acetyl-alpha-D-glucosamine + H2O = a UDP-3-O-[(3R)-3-hydroxyacyl]-alpha-D-glucosamine + acetate. It participates in glycolipid biosynthesis; lipid IV(A) biosynthesis; lipid IV(A) from (3R)-3-hydroxytetradecanoyl-[acyl-carrier-protein] and UDP-N-acetyl-alpha-D-glucosamine: step 2/6. Catalyzes the hydrolysis of UDP-3-O-myristoyl-N-acetylglucosamine to form UDP-3-O-myristoylglucosamine and acetate, the committed step in lipid A biosynthesis. The chain is UDP-3-O-acyl-N-acetylglucosamine deacetylase from Thermosynechococcus vestitus (strain NIES-2133 / IAM M-273 / BP-1).